Consider the following 299-residue polypeptide: Troponin T, cardiac muscle (299 aa).

A compositionally biased stretch (acidic residues) spans 1 to 71 (MSDAEEEVVE…EARDAEDGPV (71 aa)). 2 disordered regions span residues 1–97 (MSDA…GERV) and 137–220 (DRIE…EKKK). Serine 2 is modified (N-acetylserine). A Phosphoserine modification is found at serine 2. Composition is skewed to basic and acidic residues over residues 137–185 (DRIE…DEAR) and 204–220 (QTER…EKKK). Residue threonine 205 is modified to Phosphothreonine; by PKC/PRKCA. Serine 209 carries the phosphoserine; by PKC/PRKCA modification. Threonine 214 is subject to Phosphothreonine; by PKC/PRKCA and RAF1. Residue threonine 295 is modified to Phosphothreonine; by PKC/PRKCA.

This sequence belongs to the troponin T family. Post-translationally, phosphorylation at Thr-214 by PRKCA induces significant reduction in myofilament calcium sensitivity and actomyosin ATPase activity.

Functionally, troponin T is the tropomyosin-binding subunit of troponin, the thin filament regulatory complex which confers calcium-sensitivity to striated muscle actomyosin ATPase activity. The protein is Troponin T, cardiac muscle (Tnnt2) of Rattus norvegicus (Rat).